The following is a 268-amino-acid chain: Embryonic abundant protein USP87 (268 aa).

The signal sequence occupies residues 1-22 (MEFAHLTVLSLFCLAFVGITAT). Repeat copies occupy residues 50–55 (GKTNSL), 83–88 (GNTNSV), 101–106 (GVTDSI), 166–183 (YVVE…MCHR), and 202–222 (YVVS…VCHH). Positions 50-106 (GKTNSLPIKSEELKQYSTLFFEHDLHPRKNFILGNTNSVGSIIRPFTKSRQGVTDSI) are 3 X 6 AA approximate repeats. Residues 68 to 259 (LFFEHDLHPR…GNKAAAWVPN (192 aa)) enclose the BURP domain. The tract at residues 166–222 (YVVEDVKKVGDNAVMCHRLNFEKVVFNCHQVRDTTAYVVSLVASDGTKTKALTVCHH) is 2 X approximate repeats. Residue asparagine 259 is glycosylated (N-linked (GlcNAc...) asparagine).

As to expression, seed.

The sequence is that of Embryonic abundant protein USP87 from Vicia faba (Broad bean).